The chain runs to 200 residues: Imidazole glycerol phosphate synthase subunit HisH (200 aa).

Positions 3–200 constitute a Glutamine amidotransferase type-1 domain; the sequence is DLALIDAGGA…LRNFLEMSFP (198 aa). The Nucleophile role is filled by Cys78. Residues His179 and Glu181 contribute to the active site.

Heterodimer of HisH and HisF.

The protein localises to the cytoplasm. It carries out the reaction 5-[(5-phospho-1-deoxy-D-ribulos-1-ylimino)methylamino]-1-(5-phospho-beta-D-ribosyl)imidazole-4-carboxamide + L-glutamine = D-erythro-1-(imidazol-4-yl)glycerol 3-phosphate + 5-amino-1-(5-phospho-beta-D-ribosyl)imidazole-4-carboxamide + L-glutamate + H(+). The enzyme catalyses L-glutamine + H2O = L-glutamate + NH4(+). It participates in amino-acid biosynthesis; L-histidine biosynthesis; L-histidine from 5-phospho-alpha-D-ribose 1-diphosphate: step 5/9. In terms of biological role, IGPS catalyzes the conversion of PRFAR and glutamine to IGP, AICAR and glutamate. The HisH subunit catalyzes the hydrolysis of glutamine to glutamate and ammonia as part of the synthesis of IGP and AICAR. The resulting ammonia molecule is channeled to the active site of HisF. In Xanthomonas campestris pv. campestris (strain 8004), this protein is Imidazole glycerol phosphate synthase subunit HisH.